The sequence spans 515 residues: Protein DETOXIFICATION 32 (515 aa).

A compositionally biased stretch (basic and acidic residues) spans 1 to 26 (METLNVDHEDTISSEQEHRAHTKSDT). The interval 1–30 (METLNVDHEDTISSEQEHRAHTKSDTDMPP) is disordered. Helical transmembrane passes span 48–68 (LWWL…LGAV), 90–110 (VISG…ATLC), 131–151 (IILN…TPLL), 167–187 (FSLW…TAKF), 194–214 (VIAM…LSWL), 225–245 (GGAV…IVYI), 276–296 (AVMV…AGYL), 303–323 (VAAL…AFGF), 347–367 (LIVA…TLIV), 392–412 (LLAL…VAVG), 418–438 (IVAY…GLVL), and 448–468 (GIWT…LFII). The segment covering 488 to 497 (GDQSNKREEI) has biased composition (basic and acidic residues). The interval 488–515 (GDQSNKREEIDLCEEDENNSNGENNHRK) is disordered. The segment covering 506–515 (NSNGENNHRK) has biased composition (low complexity).

It belongs to the multi antimicrobial extrusion (MATE) (TC 2.A.66.1) family.

The protein resides in the membrane. The chain is Protein DETOXIFICATION 32 from Arabidopsis thaliana (Mouse-ear cress).